Here is a 121-residue protein sequence, read N- to C-terminus: Probable intron-encoded DNA endonuclease aI1 (121 aa).

Belongs to the LAGLIDADG endonuclease family.

The protein resides in the mitochondrion. Its function is as follows. Mitochondrial DNA endonuclease involved in intron homing. This chain is Probable intron-encoded DNA endonuclease aI1 (aI1), found in Mycosarcoma maydis (Corn smut fungus).